Consider the following 269-residue polypeptide: 4-hydroxy-tetrahydrodipicolinate reductase (269 aa).

11-16 contributes to the NAD(+) binding site; that stretch reads GPIGRM. Lys39 contacts NADP(+). NAD(+)-binding positions include 101–103 and 125–128; these read GTT and ASNF. Catalysis depends on His158, which acts as the Proton donor/acceptor. A (S)-2,3,4,5-tetrahydrodipicolinate-binding site is contributed by His159. Lys162 acts as the Proton donor in catalysis. Position 168–169 (168–169) interacts with (S)-2,3,4,5-tetrahydrodipicolinate; that stretch reads GT.

This sequence belongs to the DapB family. In terms of assembly, homotetramer.

It localises to the cytoplasm. The enzyme catalyses (S)-2,3,4,5-tetrahydrodipicolinate + NAD(+) + H2O = (2S,4S)-4-hydroxy-2,3,4,5-tetrahydrodipicolinate + NADH + H(+). The catalysed reaction is (S)-2,3,4,5-tetrahydrodipicolinate + NADP(+) + H2O = (2S,4S)-4-hydroxy-2,3,4,5-tetrahydrodipicolinate + NADPH + H(+). It participates in amino-acid biosynthesis; L-lysine biosynthesis via DAP pathway; (S)-tetrahydrodipicolinate from L-aspartate: step 4/4. Its function is as follows. Catalyzes the conversion of 4-hydroxy-tetrahydrodipicolinate (HTPA) to tetrahydrodipicolinate. In Buchnera aphidicola subsp. Acyrthosiphon pisum (strain Tuc7), this protein is 4-hydroxy-tetrahydrodipicolinate reductase.